The sequence spans 381 residues: Carboxylesterase 5A (381 aa).

S108 functions as the Acyl-ester intermediate in the catalytic mechanism. A disulfide bridge links C162 with C173. N163 carries an N-linked (GlcNAc...) asparagine glycan. E227 serves as the catalytic Charge relay system. An N-linked (GlcNAc...) asparagine glycan is attached at N245. The Charge relay system role is filled by H336.

It belongs to the type-B carboxylesterase/lipase family. As to quaternary structure, component of a epididymal complex at least composed of soluble form of prion protein PRNP, CLU, BPI, CES5A, MANBA and GLB1. Post-translationally, N-glycosylated. As to expression, detected in corpus and cauda epididymal fluid. Present in seminal fluid but not found to be associated with sperm (at protein level). Not expressed in other tissues.

The protein resides in the secreted. The catalysed reaction is a carboxylic ester + H2O = an alcohol + a carboxylate + H(+). Its function is as follows. Involved in the detoxification of xenobiotics and in the activation of ester and amide prodrugs. This is Carboxylesterase 5A (CES5A) from Ovis aries (Sheep).